The chain runs to 111 residues: Cytochrome c-550 (111 aa).

Positions 13, 16, 17, and 90 each coordinate heme c.

In terms of processing, binds 1 heme c group covalently per subunit.

This Novispirillum itersonii (Aquaspirillum itersonii) protein is Cytochrome c-550.